A 935-amino-acid polypeptide reads, in one-letter code: Isoleucine--tRNA ligase (935 aa).

Positions 58-68 (PYANGSIHVGH) match the 'HIGH' region motif. E558 contributes to the L-isoleucyl-5'-AMP binding site. The short motif at 599-603 (KMSKS) is the 'KMSKS' region element. K602 is a binding site for ATP. Positions 897, 900, 917, and 920 each coordinate Zn(2+).

Belongs to the class-I aminoacyl-tRNA synthetase family. IleS type 1 subfamily. Monomer. Zn(2+) serves as cofactor.

The protein resides in the cytoplasm. The enzyme catalyses tRNA(Ile) + L-isoleucine + ATP = L-isoleucyl-tRNA(Ile) + AMP + diphosphate. Functionally, catalyzes the attachment of isoleucine to tRNA(Ile). As IleRS can inadvertently accommodate and process structurally similar amino acids such as valine, to avoid such errors it has two additional distinct tRNA(Ile)-dependent editing activities. One activity is designated as 'pretransfer' editing and involves the hydrolysis of activated Val-AMP. The other activity is designated 'posttransfer' editing and involves deacylation of mischarged Val-tRNA(Ile). The polypeptide is Isoleucine--tRNA ligase (Francisella tularensis subsp. mediasiatica (strain FSC147)).